The following is a 184-amino-acid chain: uncharacterized protein (184 aa).

Positions 1 to 20 (MTLRKILALTCLLLPMMASA) are cleaved as a signal peptide.

This sequence to H.influenzae HI_0045.

The protein localises to the periplasm. This is an uncharacterized protein from Escherichia coli (strain K12).